The following is an 83-amino-acid chain: MKLTCVVIVAVLFLTAWTFVMADDSRYGLKDLFPKARHEMKNPEASKLNKRDECFSPGTFCGIKPGLCCSAWCYSFFCLTLTF.

An N-terminal signal peptide occupies residues 1 to 22; it reads MKLTCVVIVAVLFLTAWTFVMA. Residues 23–51 constitute a propeptide that is removed on maturation; that stretch reads DDSRYGLKDLFPKARHEMKNPEASKLNKR. Disulfide bonds link C54/C69, C61/C73, and C68/C78. P57 and P65 each carry 4-hydroxyproline.

Belongs to the conotoxin O1 superfamily. As to expression, expressed by the venom duct.

The protein resides in the secreted. Its function is as follows. Delta-conotoxins bind to site 6 of voltage-gated sodium channels (Nav) and inhibit the inactivation process. This Conus achatinus (Little frog cone) protein is Delta-conotoxin-like Ac6.1.